The sequence spans 397 residues: Probable sugar efflux transporter (397 aa).

Transmembrane regions (helical) follow at residues 15-35 (VVTL…PVGL), 51-71 (GIML…FMLL), 81-101 (LICL…AWSF), 103-123 (VLVI…SITA), 136-156 (AQAL…GLPV), 170-190 (FLAI…LLPL), 209-229 (PALM…YTAY), 246-266 (FATV…VIFG), 273-293 (ASVL…LLMP), 301-321 (LAIL…GMQV), 333-353 (VAMS…ALVG), and 364-384 (DIGY…VIIF).

It belongs to the major facilitator superfamily. SotB (TC 2.A.1.2) family.

It is found in the cell inner membrane. Its function is as follows. Involved in the efflux of sugars. The physiological role may be the reduction of the intracellular concentration of toxic sugars or sugar metabolites. In Escherichia fergusonii (strain ATCC 35469 / DSM 13698 / CCUG 18766 / IAM 14443 / JCM 21226 / LMG 7866 / NBRC 102419 / NCTC 12128 / CDC 0568-73), this protein is Probable sugar efflux transporter.